The sequence spans 537 residues: Probable alpha-galactosidase A (537 aa).

Positions 1-23 (MNQGTKSILLAATLAAIPWQVYG) are cleaved as a signal peptide. Cys46 and Cys78 form a disulfide bridge. N-linked (GlcNAc...) asparagine glycosylation is found at Asn49, Asn87, Asn93, and Asn123. A disulfide bond links Cys126 and Cys156. The active-site Nucleophile is the Asp154. Asn203 carries an N-linked (GlcNAc...) asparagine glycan. The active-site Proton donor is Asp212. Asn355 and Asn436 each carry an N-linked (GlcNAc...) asparagine glycan. A Ricin B-type lectin domain is found at 413–537 (CSSVVPTGLV…FGLPSGVQLS (125 aa)). 2 disulfides stabilise this stretch: Cys430-Cys444 and Cys469-Cys482. An N-linked (GlcNAc...) asparagine glycan is attached at Asn491.

Belongs to the glycosyl hydrolase 27 family.

It is found in the secreted. The enzyme catalyses Hydrolysis of terminal, non-reducing alpha-D-galactose residues in alpha-D-galactosides, including galactose oligosaccharides, galactomannans and galactolipids.. Hydrolyzes a variety of simple alpha-D-galactoside as well as more complex molecules such as oligosaccharides and polysaccharides. The polypeptide is Probable alpha-galactosidase A (aglA) (Aspergillus niger (strain ATCC MYA-4892 / CBS 513.88 / FGSC A1513)).